The following is a 173-amino-acid chain: Photosystem I assembly protein Ycf3 (173 aa).

3 TPR repeats span residues 35–68 (AFSY…EEDP), 72–105 (SYIL…NFKL), and 120–153 (GVQA…APDN).

It belongs to the Ycf3 family.

Its subcellular location is the plastid. It localises to the chloroplast thylakoid membrane. Essential for the assembly of the photosystem I (PSI) complex. May act as a chaperone-like factor to guide the assembly of the PSI subunits. The chain is Photosystem I assembly protein Ycf3 from Pyropia yezoensis (Susabi-nori).